The primary structure comprises 62 residues: uncharacterized protein (62 aa).

The stretch at 28-61 forms a coiled coil; that stretch reads KIESTHPEIAKKLKEAAEKYREVEEILKKAVDMV.

This is an uncharacterized protein from Archaeoglobus fulgidus (strain ATCC 49558 / DSM 4304 / JCM 9628 / NBRC 100126 / VC-16).